The sequence spans 170 residues: MELKNFIRDIPDFPQKGVMFRDITPLVKNPEAFKYAIDTIAEELGKYDFDLIVCPEARGFIIAAPLAYKLDKGLVPVRKPGKLPYKTISDVYELEYGKAELHMHEDAIQPNQKVVIIDDVLATGGTAMALKRLVEKAGGIVVASAFLIELTYLNPRNIIKDLPIIAPIKY.

It belongs to the purine/pyrimidine phosphoribosyltransferase family. Homodimer.

The protein localises to the cytoplasm. The catalysed reaction is AMP + diphosphate = 5-phospho-alpha-D-ribose 1-diphosphate + adenine. Its pathway is purine metabolism; AMP biosynthesis via salvage pathway; AMP from adenine: step 1/1. Its function is as follows. Catalyzes a salvage reaction resulting in the formation of AMP, that is energically less costly than de novo synthesis. The protein is Adenine phosphoribosyltransferase of Fervidobacterium nodosum (strain ATCC 35602 / DSM 5306 / Rt17-B1).